The chain runs to 283 residues: Tetraspanin-33 (283 aa).

Residues 1–24 (MARRPGAPAAYGEDFSFVSPLVKY) lie on the Cytoplasmic side of the membrane. Residues 25–45 (LLFFFNMLFWVISMVMVAVGV) form a helical membrane-spanning segment. Topologically, residues 46 to 64 (YARLMKHEEAALACLAVDP) are extracellular. The chain crosses the membrane as a helical span at residues 65–85 (AILLIVVGILMFLLTFCGCIG). At 86–96 (SLRENICLLQT) the chain is on the cytoplasmic side. Residues 97-117 (FSLCLTVVFLLQLAAGVLGFV) form a helical membrane-spanning segment. Topologically, residues 118 to 235 (FSDKVRGKVS…DRLVNWIHSN (118 aa)) are extracellular. 4 cysteine pairs are disulfide-bonded: Cys-156-Cys-224, Cys-157-Cys-189, Cys-173-Cys-183, and Cys-190-Cys-203. A glycan (N-linked (GlcNAc...) asparagine) is linked at Asn-172. Residues 236–256 (LFVLGGVALGLAIPQLVGIML) form a helical membrane-spanning segment. The Cytoplasmic portion of the chain corresponds to 257–283 (SMILVSQIKDQIKLQLYNQQHRADPWY).

Belongs to the tetraspanin (TM4SF) family. As to quaternary structure, homodimer; disulfide-linked. Interacts (via extracellular domain) with ADAM10 (via extracellular domain). Interacts (via cytoplasmic domain) with PLEKHA7 (via WW domains); the interaction is dependent on PDZD11 being bound to PLEKHA7 and facilitates the docking of ADAM10 to zonula adherens.

It localises to the cell membrane. It is found in the cell junction. The protein resides in the adherens junction. The protein localises to the cytoplasm. In terms of biological role, part of TspanC8 subgroup, composed of 6 members that interact with the transmembrane metalloprotease ADAM10. This interaction is required for ADAM10 exit from the endoplasmic reticulum and for enzymatic maturation and trafficking to the cell surface as well as substrate specificity. Different TspanC8/ADAM10 complexes have distinct substrates. Plays an important role in normal erythropoiesis. It has a role in the differentiation of erythroid progenitors. Negatively regulates ligand-induced Notch activity probably by regulating ADAM10 activity. Mediates docking of ADAM10 to zonula adherens by interacting with ADAM10 and, in a PDZD11-dependent manner, with the zonula adherens protein PLEKHA7. This chain is Tetraspanin-33 (TSPAN33), found in Bos taurus (Bovine).